A 497-amino-acid polypeptide reads, in one-letter code: Putative diacyglycerol O-acyltransferase Rv3480c (497 aa).

His-143 functions as the Proton acceptor in the catalytic mechanism.

This sequence belongs to the long-chain O-acyltransferase family.

The catalysed reaction is an acyl-CoA + a 1,2-diacyl-sn-glycerol = a triacyl-sn-glycerol + CoA. It carries out the reaction di-(9Z)-octadecenoylglycerol + (9Z)-octadecenoyl-CoA = 1,2,3-tri-(9Z-octadecenoyl)-glycerol + CoA. It catalyses the reaction hexadecan-1-ol + hexadecanoyl-CoA = hexadecanyl hexadecanoate + CoA. Its pathway is glycerolipid metabolism; triacylglycerol biosynthesis. Functionally, upon expression in E.coli has a weak triacylglycerol synthase function, making triacylglycerol (TG) from diolein and long-chain fatty acyl-CoA. Also functions weakly as a wax synthase, as it incorporates palmityl alcohol into wax esters in the presence of palmitoyl-CoA. This chain is Putative diacyglycerol O-acyltransferase Rv3480c, found in Mycobacterium tuberculosis (strain ATCC 25618 / H37Rv).